Consider the following 145-residue polypeptide: 3-hydroxyacyl-[acyl-carrier-protein] dehydratase FabZ (145 aa).

The active site involves His-48.

This sequence belongs to the thioester dehydratase family. FabZ subfamily.

It is found in the cytoplasm. The enzyme catalyses a (3R)-hydroxyacyl-[ACP] = a (2E)-enoyl-[ACP] + H2O. Its function is as follows. Involved in unsaturated fatty acids biosynthesis. Catalyzes the dehydration of short chain beta-hydroxyacyl-ACPs and long chain saturated and unsaturated beta-hydroxyacyl-ACPs. The polypeptide is 3-hydroxyacyl-[acyl-carrier-protein] dehydratase FabZ (Marinobacter nauticus (strain ATCC 700491 / DSM 11845 / VT8) (Marinobacter aquaeolei)).